A 2017-amino-acid polypeptide reads, in one-letter code: Protein cbp-1 (2017 aa).

Positions 1–13 are enriched in basic and acidic residues; the sequence is MDEPPSKKSRADS. A disordered region spans residues 1–182; that stretch reads MDEPPSKKSR…PGMFQGDQQQ (182 aa). 2 stretches are compositionally biased toward low complexity: residues 21 to 30 and 78 to 90; these read ALSALESLEA and QPGQ…PPQN. Residues 106–116 show a composition bias toward polar residues; that stretch reads NPSQTSNNSPR. A compositionally biased stretch (low complexity) spans 141-151; sequence MMSPPSMGRVP. Pro residues predominate over residues 152-164; the sequence is GPSPGGPQPPGPG. Residues 165–182 are compositionally biased toward low complexity; it reads QPQMRPGQPGMFQGDQQQ. R234 carries the symmetric dimethylarginine; by PRMT5; in vitro modification. Positions 307–398 are disordered; the sequence is SNGQPIRGPN…PGSSMLATHQ (92 aa). The span at 340–379 shows a compositional bias: low complexity; it reads QAAAAQHAAQQQAAAQAQAQAAAQQQQQQQREQEAAAAAQ. Residues 399–505 form a TAZ-type 1 zinc finger; it reads DPEKRKLIQQ…REDCPVCKPL (107 aa). Disordered stretches follow at residues 558 to 593 and 706 to 864; these read EGFN…DMPD and GRSD…DTVF. Low complexity predominate over residues 559 to 573; the sequence is GFNGNPFQNGPNRGG. Positions 593–672 constitute a KIX domain; sequence DCTKEWHHQV…KIYKIQKELQ (80 aa). Residues 721 to 773 show a composition bias toward polar residues; it reads PSQQNQPWGGAPNSNMHQQIPPNGQVPQVNNSSTFPSSGNSTPNIGASSTVSA. Residues 834 to 854 are compositionally biased toward basic and acidic residues; that stretch reads KDTKDGVAESKPKEQQAKREP. Positions 864-970 constitute a Bromo domain; sequence FSQEDLIKFL…EMFVSEMDPV (107 aa). Interaction with histone regions lie at residues 902 to 948 and 1224 to 1226; these read DYHE…YNRK and YLD. Residues 1112–1492 form the CBP/p300-type HAT domain; the sequence is KYLASKLPHN…LAYSLHETDS (381 aa). Acetyl-CoA contacts are provided by residues 1225 to 1227, 1237 to 1238, I1284, R1289, and W1293; these read LDS and RT. The span at 1349 to 1358 shows a compositional bias: basic and acidic residues; the sequence is NEEAQRKVKE. The segment at 1349-1401 is disordered; the sequence is NEEAQRKVKEDDDDGEDADGGLGGGDSGKKKSSKNKKNNLKKNAKMNKKKAGS. Positions 1378–1399 are enriched in basic residues; that stretch reads KKSSKNKKNNLKKNAKMNKKKA. The ZZ-type zinc finger occupies 1494–1540; that stretch reads GMEYTCNKCSSPAVWHCQSCDDFDLCDGCKPTTQHPHEMEKIKSLIG. Zn(2+)-binding residues include C1499, C1502, C1510, C1513, C1519, C1522, H1528, and H1530. The TAZ-type 2 zinc-finger motif lies at 1550 to 1631; that stretch reads GGTRYESIQR…ACTVPFCMNI (82 aa). Disordered stretches follow at residues 1656-1828 and 1908-2017; these read GLQS…QPVR and SQMS…AGGQ. Residues 1667–1678 are compositionally biased toward polar residues; it reads TPSTVSNGTPSN. Positions 1699-1708 are enriched in low complexity; that stretch reads QVQMQQHQGS. Residues 1748–1757 show a composition bias toward polar residues; the sequence is PQMNANQSRY. Composition is skewed to low complexity over residues 1793-1812 and 1908-1932; these read MNPQ…QNPG and SQMS…QAGA. The segment covering 1943-1962 has biased composition (polar residues); sequence QNNSQPRAPSGQFASMNPSM. Residues 1963 to 2017 show a composition bias toward low complexity; that stretch reads QQQYPQQQQGWPQQRQQNPGGMQQNANPYNQFQNRQNMMMMPQQQQPHPSNAGGQ.

In terms of assembly, interacts (via N-terminus domain and HAT domain) with prmt-5; the interaction results in methylation of cbp-1. Interacts (via HAT domain) with cep-1; cep-1 transcriptional activity may be inhibited by interaction with methylated cbp-1. Component of a complex that contains prmt-5 and cbp-1. Methylation by prmt-5 may repress the capacity of cbp-1 to enhance cep-1-dependent transcription of egl-1.

It localises to the nucleus. The catalysed reaction is L-lysyl-[protein] + acetyl-CoA = N(6)-acetyl-L-lysyl-[protein] + CoA + H(+). Acetyltransferase enzyme. Acetylates histones, giving a specific tag for transcriptional activation. May prevent DNA damage-induced apoptosis by inhibiting cep-1-dependent transcription activation of the programmed cell death activator egl-1. In differentiated cells, negatively regulates localization of heterochromatin to the nuclear periphery. Plays a role in migration of gonadal distal tip cells, where it probably modulates expression of genes involved in integrin-mediated adhesion. The protein is Protein cbp-1 (cbp-1) of Caenorhabditis elegans.